The following is a 1147-amino-acid chain: Protein lin-41 (1147 aa).

Residues Met1–Gln93 are disordered. Low complexity predominate over residues Ser33 to Asp47. Residues Ser48 to Asn65 are compositionally biased toward basic and acidic residues. Low complexity predominate over residues Pro84–Gln93. An RING-type zinc finger spans residues Cys114 to Gly155. Residues Met366–Leu412 form a B box-type; atypical zinc finger. Zn(2+) contacts are provided by Cys371, Cys374, Cys394, and His398. Residues Ala565–Lys618 adopt a coiled-coil conformation. One copy of the Filamin repeat lies at Ala723–Ile817. 6 NHL repeats span residues Ile832 to Asp875, Ile879 to Asn922, Leu926 to Gln969, Arg974 to Arg1017, Met1022 to Asp1065, and Ser1107 to Phe1147. Residues Ala1104 to Pro1123 are disordered.

Belongs to the TRIM/RBCC family.

It localises to the cytoplasm. The protein resides in the P-body. In terms of biological role, heterochronic protein which acts downstream of let-7 in temporal patterning. Plays a role in the developmental timing of postembryonic hypodermal seam cell division and fusion events and adult alae production. Represses lin-29 during late larval stages, which prevents terminal differentiation of hypodermal seam cells and promotes their division. Involved in post-transcriptional gene regulation, uses two independent pathways. Has direct and specific RNA-binding activity and, depending on the location (5'UTR or 3'UTR) of the target site, triggers either mRNA decay or repression of translation. Degrades the mRNA of transcription factor dmd-3 to govern the timing and extent of male tail tip morphogenesis. Plays a role in the sexual maturation of the nervous system. The protein is Protein lin-41 of Caenorhabditis elegans.